Reading from the N-terminus, the 141-residue chain is Hemoglobin subunit alpha (141 aa).

The Globin domain maps to 1-141; the sequence is VLSPADKTNV…VSTVLTSKYR (141 aa). Serine 3 carries the post-translational modification Phosphoserine. N6-succinyllysine is present on lysine 7. Threonine 8 carries the phosphothreonine modification. Lysine 11 bears the N6-succinyllysine mark. Lysine 16 carries the post-translational modification N6-acetyllysine; alternate. Lysine 16 carries the post-translational modification N6-succinyllysine; alternate. Phosphotyrosine is present on tyrosine 24. Position 40 is an N6-succinyllysine (lysine 40). Histidine 58 contacts O2. Position 87 (histidine 87) interacts with heme b. Serine 102 bears the Phosphoserine mark. Threonine 108 carries the phosphothreonine modification. A phosphoserine mark is found at serine 124 and serine 131. Residues threonine 134 and threonine 137 each carry the phosphothreonine modification. A Phosphoserine modification is found at serine 138.

The protein belongs to the globin family. Heterotetramer of two alpha chains and two beta chains. In terms of tissue distribution, red blood cells.

In terms of biological role, involved in oxygen transport from the lung to the various peripheral tissues. Hemopressin acts as an antagonist peptide of the cannabinoid receptor CNR1. Hemopressin-binding efficiently blocks cannabinoid receptor CNR1 and subsequent signaling. The chain is Hemoglobin subunit alpha (HBA) from Tursiops truncatus (Atlantic bottle-nosed dolphin).